The following is a 258-amino-acid chain: Ribosomal RNA large subunit methyltransferase E (258 aa).

Residues Gly-58, Trp-60, Asp-78, Asp-96, and Asp-120 each coordinate S-adenosyl-L-methionine. Catalysis depends on Lys-160, which acts as the Proton acceptor.

Belongs to the class I-like SAM-binding methyltransferase superfamily. RNA methyltransferase RlmE family.

The protein resides in the cytoplasm. The enzyme catalyses uridine(2552) in 23S rRNA + S-adenosyl-L-methionine = 2'-O-methyluridine(2552) in 23S rRNA + S-adenosyl-L-homocysteine + H(+). Its function is as follows. Specifically methylates the uridine in position 2552 of 23S rRNA at the 2'-O position of the ribose in the fully assembled 50S ribosomal subunit. This chain is Ribosomal RNA large subunit methyltransferase E, found in Methanococcus maripaludis (strain C7 / ATCC BAA-1331).